A 479-amino-acid chain; its full sequence is ESX-1 secretion system ATPase EccB1 (479 aa).

The Cytoplasmic segment spans residues 1 to 44; sequence MAGFRLTTKVQVSGWRFLLRRVEHAIVRRDTRMFDDPLQFYSRA. The helical transmembrane segment at 45–65 threads the bilayer; the sequence is VFAGVVVSVLICLGAALMAYF. Over 66 to 479 the chain is Periplasmic; that stretch reads KPLGKQGSDQ…NPRKVASGEG (414 aa). A disulfide bridge connects residues Cys152 and Cys347.

This sequence belongs to the EccB family. As to quaternary structure, part of the ESX-1 / type VII secretion system (T7SS), which is composed of cytosolic and membrane components. The ESX-1 membrane complex is composed of EccB1, EccCa1, EccCb1, EccD1 and EccE1.

The protein localises to the cell inner membrane. Its function is as follows. An ATPase. Part of the ESX-1 / type VII specialized secretion system (T7SS), which exports several proteins including EsxA and EsxB. Plays a role in DNA conjugation, in both donor and recipient strains. This is ESX-1 secretion system ATPase EccB1 from Mycolicibacterium smegmatis (strain MKD8) (Mycobacterium smegmatis).